The following is a 146-amino-acid chain: Large ribosomal subunit protein uL15 (146 aa).

The span at 1 to 13 (MKLHELKPAEGSR) shows a compositional bias: basic and acidic residues. The tract at residues 1 to 59 (MKLHELKPAEGSRKVRNRVGRGTSSGNGKTSGRGQKGQKARSGGGVRLGFEGGQTPLFR) is disordered. Composition is skewed to gly residues over residues 23-35 (TSSGNGKTSGRGQ) and 42-52 (SGGGVRLGFEG).

It belongs to the universal ribosomal protein uL15 family. As to quaternary structure, part of the 50S ribosomal subunit.

Binds to the 23S rRNA. This chain is Large ribosomal subunit protein uL15, found in Streptococcus agalactiae serotype Ia (strain ATCC 27591 / A909 / CDC SS700).